The following is a 198-amino-acid chain: Probable GTP-binding protein EngB (198 aa).

The 175-residue stretch at N21–V195 folds into the EngB-type G domain. GTP contacts are provided by residues G29–S36, G56–L60, D75–G78, T142–D145, and V174–N176. Mg(2+)-binding residues include S36 and T58.

The protein belongs to the TRAFAC class TrmE-Era-EngA-EngB-Septin-like GTPase superfamily. EngB GTPase family. The cofactor is Mg(2+).

Functionally, necessary for normal cell division and for the maintenance of normal septation. The chain is Probable GTP-binding protein EngB from Mesoplasma florum (strain ATCC 33453 / NBRC 100688 / NCTC 11704 / L1) (Acholeplasma florum).